The primary structure comprises 374 residues: Ribosomal RNA large subunit methyltransferase G (374 aa).

This sequence belongs to the methyltransferase superfamily. RlmG family.

Its subcellular location is the cytoplasm. The enzyme catalyses guanosine(1835) in 23S rRNA + S-adenosyl-L-methionine = N(2)-methylguanosine(1835) in 23S rRNA + S-adenosyl-L-homocysteine + H(+). In terms of biological role, specifically methylates the guanine in position 1835 (m2G1835) of 23S rRNA. This is Ribosomal RNA large subunit methyltransferase G from Pseudomonas fluorescens (strain ATCC BAA-477 / NRRL B-23932 / Pf-5).